The following is a 307-amino-acid chain: Glutaminase (307 aa).

Substrate-binding residues include Ser-66, Asn-116, Glu-160, Asn-167, Tyr-191, Tyr-243, and Val-261.

This sequence belongs to the glutaminase family. In terms of assembly, homotetramer.

It carries out the reaction L-glutamine + H2O = L-glutamate + NH4(+). The sequence is that of Glutaminase from Pseudoalteromonas translucida (strain TAC 125).